The following is a 169-amino-acid chain: Transcription regulatory protein SNF11 (169 aa).

Residues 1-24 (MSSEIAYSNTNTNTENENRNTGAG) form a disordered region. Ser2 carries the N-acetylserine modification. A compositionally biased stretch (low complexity) spans 9 to 21 (NTNTNTENENRNT). A run of 8 repeats spans residues 28–31 (NTNA), 32–35 (NANA), 36–39 (NATA), 40–43 (NATA), 44–47 (NATA), 48–51 (NATA), 76–80 (LLARV), and 160–165 (LLLARV). The segment at 28 to 51 (NTNANANANATANATANATANATA) is 6 X 4 AA tandem repeats of N-[AT]-[NT]-A. Residues 76–165 (LLARVIQMNN…SKLYLLLARV (90 aa)) are 2 X 5 AA repeats of L-L-A-R-V.

Component of the SWI/SNF global transcription activator complex. The 1.14 MDa SWI/SNF complex is composed of 11 different subunits: one copy each of SWI1, SNF2/SWI2, SNF5, SNF12/SWP73, ARP7/SWP61, ARP9/SWP59; two copies each of SWI3, SNF6, SNF11, SWP82; and three copies of TAF14/SWP29.

It is found in the nucleus. Involved in transcriptional activation. Component of the SWI/SNF complex, an ATP-dependent chromatin remodeling complex, which is required for the positive and negative regulation of gene expression of a large number of genes. It changes chromatin structure by altering DNA-histone contacts within a nucleosome, leading eventually to a change in nucleosome position, thus facilitating or repressing binding of gene-specific transcription factors. This is Transcription regulatory protein SNF11 (SNF11) from Saccharomyces cerevisiae (strain ATCC 204508 / S288c) (Baker's yeast).